Reading from the N-terminus, the 370-residue chain is Lysophosphatidic acid receptor 4 (370 aa).

The Extracellular segment spans residues 1–43 (MGDRRFIDFQFQDLNSSLRPRLGNATANNTCIVDDSFKYNLNG). N15, N24, and N28 each carry an N-linked (GlcNAc...) asparagine glycan. The helical transmembrane segment at 44 to 64 (AVYSVVFILGLITNSASLFVF) threads the bilayer. The Cytoplasmic portion of the chain corresponds to 65–73 (CFRMKMRSE). A helical membrane pass occupies residues 74–94 (TAIFITNLALSDLLFVCTLPF). At 95-112 (KIFYNFNRHWPFGDTLCK) the chain is on the extracellular side. A disulfide bridge links C111 with C188. A helical membrane pass occupies residues 113-133 (ISGTAFLTNIYGSMLFLTCIS). Topologically, residues 134-155 (VDRFLAIVYPFRSRTIRTRRNS) are cytoplasmic. Residues 156 to 176 (AIVCAGVWILVLSGGISASLF) form a helical membrane-spanning segment. Topologically, residues 177–203 (STTNVNNATTTCFEGFSKRVWKTYLSK) are extracellular. Residue N183 is glycosylated (N-linked (GlcNAc...) asparagine). The helical transmembrane segment at 204 to 224 (ITIFIEVVGFIIPLILNVSCS) threads the bilayer. Residues 225 to 254 (SVVLRTLRKPATLSQIGTNKKKVLKMITVH) lie on the Cytoplasmic side of the membrane. The helical transmembrane segment at 255-275 (MAVFVVCFVPYNSVLFLYALV) threads the bilayer. Residues 276–294 (RSQAITNCLLERFAKIMYP) lie on the Extracellular side of the membrane. Residues 295 to 315 (ITLCLATLNCCFDPFIYYFTL) form a helical membrane-spanning segment. At 316-370 (ESFQKSFYINTHIRMESLFKTETPLTPKPSLPAIQEEVSDQTTNNGGELMLESTF) the chain is on the cytoplasmic side.

Belongs to the G-protein coupled receptor 1 family.

It is found in the cell membrane. In terms of biological role, receptor for lysophosphatidic acid (LPA), a mediator of diverse cellular activities. Transduces a signal by increasing the intracellular calcium ions and by stimulating adenylyl cyclase activity. The rank order of potency for agonists of this receptor is 1-oleoyl- &gt; 1-stearoyl- &gt; 1-palmitoyl- &gt; 1-myristoyl- &gt; 1-alkyl- &gt; 1-alkenyl-LPA. The polypeptide is Lysophosphatidic acid receptor 4 (Lpar4) (Mus musculus (Mouse)).